Here is a 303-residue protein sequence, read N- to C-terminus: Biphenyl-2,3-diol 1,2-dioxygenase (303 aa).

VOC domains lie at 5 to 119 (SLGY…IYYG) and 143 to 264 (GLGH…YGWS). His-146, His-210, and Glu-260 together coordinate Fe cation. The disordered stretch occupies residues 283-303 (WGHKSVRDKALRATKHEQQPE). Basic and acidic residues predominate over residues 287 to 303 (SVRDKALRATKHEQQPE).

It belongs to the extradiol ring-cleavage dioxygenase family. As to quaternary structure, homooctamer. The cofactor is Fe(2+).

It carries out the reaction biphenyl-2,3-diol + O2 = 2-hydroxy-6-oxo-6-phenylhexa-2,4-dienoate + H(+). It functions in the pathway xenobiotic degradation; biphenyl degradation; 2-hydroxy-2,4-pentadienoate and benzoate from biphenyl: step 3/4. This is Biphenyl-2,3-diol 1,2-dioxygenase (bphC) from Metapseudomonas furukawaii (Pseudomonas furukawaii).